The chain runs to 172 residues: Small ribosomal subunit protein uS5 (172 aa).

The S5 DRBM domain maps to 16–79 (LKDRLVAINR…ESAKKNLTRV (64 aa)).

Belongs to the universal ribosomal protein uS5 family. As to quaternary structure, part of the 30S ribosomal subunit. Contacts proteins S4 and S8.

With S4 and S12 plays an important role in translational accuracy. Functionally, located at the back of the 30S subunit body where it stabilizes the conformation of the head with respect to the body. In Bacteroides fragilis (strain ATCC 25285 / DSM 2151 / CCUG 4856 / JCM 11019 / LMG 10263 / NCTC 9343 / Onslow / VPI 2553 / EN-2), this protein is Small ribosomal subunit protein uS5.